The following is a 396-amino-acid chain: Capsular polysaccharide biosynthesis protein CapF (396 aa).

12 consecutive transmembrane segments (helical) span residues 7-27, 41-61, 74-94, 101-121, 129-149, 153-173, 198-218, 232-252, 279-299, 315-335, 351-371, and 372-392; these read YMFV…LVIV, ALVI…SVIV, AILS…YVLG, ILIV…YGIY, LLGI…YIIY, HNLN…FAII, IFIL…NTGI, LGIF…ANSI, MVFI…FLGE, IILI…FLGT, LILL…YSLL, and GAAL…YYFY.

Belongs to the polysaccharide synthase family.

It localises to the cell membrane. It participates in capsule biogenesis; capsule polysaccharide biosynthesis. Functionally, required for the biosynthesis of type 1 capsular polysaccharide. The polypeptide is Capsular polysaccharide biosynthesis protein CapF (capF) (Staphylococcus aureus).